The sequence spans 34 residues: MEVNILAFIATALFILIPTAFLLIIYVKTASQND.

Residues 5 to 25 (ILAFIATALFILIPTAFLLII) form a helical membrane-spanning segment.

Belongs to the PsbM family. PSII is composed of 1 copy each of membrane proteins PsbA, PsbB, PsbC, PsbD, PsbE, PsbF, PsbH, PsbI, PsbJ, PsbK, PsbL, PsbM, PsbT, PsbX, PsbY, PsbZ, Psb30/Ycf12, at least 3 peripheral proteins of the oxygen-evolving complex and a large number of cofactors. It forms dimeric complexes.

The protein localises to the plastid. Its subcellular location is the chloroplast thylakoid membrane. Its function is as follows. One of the components of the core complex of photosystem II (PSII). PSII is a light-driven water:plastoquinone oxidoreductase that uses light energy to abstract electrons from H(2)O, generating O(2) and a proton gradient subsequently used for ATP formation. It consists of a core antenna complex that captures photons, and an electron transfer chain that converts photonic excitation into a charge separation. This subunit is found at the monomer-monomer interface. This is Photosystem II reaction center protein M from Agrostis stolonifera (Creeping bentgrass).